The chain runs to 333 residues: Protein-methionine-sulfoxide reductase catalytic subunit MsrP (333 aa).

Positions 1–43 (MSKQRKLTEADVTPESVFYQRRKVLQALGITAASLALPHNAQA) form a signal peptide, tat-type signal. Mo-molybdopterin-binding positions include asparagine 87, 90–91 (YE), cysteine 145, threonine 180, asparagine 232, arginine 237, and 248–250 (GIK).

It belongs to the MsrP family. Heterodimer of a catalytic subunit (MsrP) and a heme-binding subunit (MsrQ). Mo-molybdopterin is required as a cofactor. In terms of processing, predicted to be exported by the Tat system. The position of the signal peptide cleavage has not been experimentally proven.

Its subcellular location is the periplasm. It carries out the reaction L-methionyl-[protein] + a quinone + H2O = L-methionyl-(S)-S-oxide-[protein] + a quinol. It catalyses the reaction L-methionyl-[protein] + a quinone + H2O = L-methionyl-(R)-S-oxide-[protein] + a quinol. Part of the MsrPQ system that repairs oxidized periplasmic proteins containing methionine sulfoxide residues (Met-O), using respiratory chain electrons. Thus protects these proteins from oxidative-stress damage caused by reactive species of oxygen and chlorine generated by the host defense mechanisms. MsrPQ is essential for the maintenance of envelope integrity under bleach stress, rescuing a wide series of structurally unrelated periplasmic proteins from methionine oxidation. The catalytic subunit MsrP is non-stereospecific, being able to reduce both (R-) and (S-) diastereoisomers of methionine sulfoxide. The chain is Protein-methionine-sulfoxide reductase catalytic subunit MsrP from Serratia proteamaculans (strain 568).